A 121-amino-acid polypeptide reads, in one-letter code: Flagellar protein FliT (121 aa).

The interval 1–50 is required for homodimerization; sequence MNHAPHLYFAWQQLVEKSQLMLRLATEEQWDELIASEMAYVNAVQEIAHL. The tract at residues 60–98 is fliD binding; it reads MQEQLRPMLRLILDNESKVKQLLQIRMDELAKLVGQSSV.

It belongs to the FliT family. Homodimer. Interacts with FliD and FlhC.

It is found in the cytoplasm. The protein resides in the cytosol. Its function is as follows. Dual-function protein that regulates the transcription of class 2 flagellar operons and that also acts as an export chaperone for the filament-capping protein FliD. As a transcriptional regulator, acts as an anti-FlhDC factor; it directly binds FlhC, thus inhibiting the binding of the FlhC/FlhD complex to class 2 promoters, resulting in decreased expression of class 2 flagellar operons. As a chaperone, effects FliD transition to the membrane by preventing its premature polymerization, and by directing it to the export apparatus. This chain is Flagellar protein FliT, found in Escherichia coli O157:H7.